A 733-amino-acid chain; its full sequence is Phosphoribosylformylglycinamidine synthase subunit PurL (733 aa).

The active site involves histidine 32. Tyrosine 35 is an ATP binding site. Mg(2+) is bound at residue glutamate 81. Residues 82–85 (SHNH) and arginine 104 contribute to the substrate site. Residue histidine 83 is the Proton acceptor of the active site. Mg(2+) is bound at residue aspartate 105. Position 230 (glutamine 230) interacts with substrate. Aspartate 258 contacts Mg(2+). Residue 301–303 (ESQ) coordinates substrate. ATP is bound by residues aspartate 482 and glycine 519. Residue asparagine 520 coordinates Mg(2+). Serine 522 provides a ligand contact to substrate.

The protein belongs to the FGAMS family. As to quaternary structure, monomer. Part of the FGAM synthase complex composed of 1 PurL, 1 PurQ and 2 PurS subunits.

Its subcellular location is the cytoplasm. The catalysed reaction is N(2)-formyl-N(1)-(5-phospho-beta-D-ribosyl)glycinamide + L-glutamine + ATP + H2O = 2-formamido-N(1)-(5-O-phospho-beta-D-ribosyl)acetamidine + L-glutamate + ADP + phosphate + H(+). It functions in the pathway purine metabolism; IMP biosynthesis via de novo pathway; 5-amino-1-(5-phospho-D-ribosyl)imidazole from N(2)-formyl-N(1)-(5-phospho-D-ribosyl)glycinamide: step 1/2. Functionally, part of the phosphoribosylformylglycinamidine synthase complex involved in the purines biosynthetic pathway. Catalyzes the ATP-dependent conversion of formylglycinamide ribonucleotide (FGAR) and glutamine to yield formylglycinamidine ribonucleotide (FGAM) and glutamate. The FGAM synthase complex is composed of three subunits. PurQ produces an ammonia molecule by converting glutamine to glutamate. PurL transfers the ammonia molecule to FGAR to form FGAM in an ATP-dependent manner. PurS interacts with PurQ and PurL and is thought to assist in the transfer of the ammonia molecule from PurQ to PurL. The protein is Phosphoribosylformylglycinamidine synthase subunit PurL of Methanocaldococcus jannaschii (strain ATCC 43067 / DSM 2661 / JAL-1 / JCM 10045 / NBRC 100440) (Methanococcus jannaschii).